A 505-amino-acid polypeptide reads, in one-letter code: L-arabinose isomerase (505 aa).

Mn(2+) is bound by residues glutamate 310, glutamate 337, histidine 354, and histidine 453.

It belongs to the arabinose isomerase family. It depends on Mn(2+) as a cofactor.

It catalyses the reaction beta-L-arabinopyranose = L-ribulose. The protein operates within carbohydrate degradation; L-arabinose degradation via L-ribulose; D-xylulose 5-phosphate from L-arabinose (bacterial route): step 1/3. Catalyzes the conversion of L-arabinose to L-ribulose. In Clavibacter sepedonicus (Clavibacter michiganensis subsp. sepedonicus), this protein is L-arabinose isomerase.